A 458-amino-acid polypeptide reads, in one-letter code: MAWASRLGLLLALLLPVVGASTPGTVVRLNKAALSYVSEIGKAPLQRALQVTVPHFLDWSGEALQPTRIRILNVHVPRLHLKFIAGFGVRLLAAANFTFKVFRAPEPLELTLPVELLADTRVTQSSIRTPVVSISACSLFSGHANEFDGSNSTSHALLVLVQKHIKAVLSNKLCLSISNLVQGVNVHLGTLIGLNPVGPESQIRYSMVSVPTVTSDYISLEVNAVLFLLGKPIILPTDATPFVLPRHVGTEGSMATVGLSQQLFDSALLLLQKAGALNLDITGQLRSDDNLLNTSALGRLIPEVARQFPEPMPVVLKVRLGATPVAMLHTNNATLRLQPFVEVLATASNSAFQSLFSLDVVVNLRLQLSVSKVKLQGTTSVLGDVQLTVASSNVGFIDTDQVRTLMGTVFEKPLLDHLNALLAMGIALPGVVNLHYVAPEIFVYEGYVVISSGLFYQS.

An N-terminal signal peptide occupies residues 1-20 (MAWASRLGLLLALLLPVVGA). T52 carries the phosphothreonine; by FAM20C modification. A Phosphoserine; by FAM20C modification is found at S60. N-linked (GlcNAc...) asparagine glycans are attached at residues N96, N151, N293, and N332. A disulfide bridge connects residues C137 and C174.

This sequence belongs to the BPI/LBP/Plunc superfamily. BPI/LBP family. In terms of tissue distribution, highly expressed in tonsils, especially in hypertrophic tonsils. Detected at very low levels in fetal liver.

It localises to the secreted. The protein is BPI fold-containing family B member 2 (BPIFB2) of Homo sapiens (Human).